Here is a 381-residue protein sequence, read N- to C-terminus: Dual-specificity RNA methyltransferase RlmN (381 aa).

The Proton acceptor role is filled by E96. Positions 102-342 constitute a Radical SAM core domain; it reads TDDRGTLCVS…TRTTRGDDID (241 aa). A disulfide bridge links C109 with C345. [4Fe-4S] cluster is bound by residues C116, C120, and C123. Residues 170–171, S202, 224–226, and N302 contribute to the S-adenosyl-L-methionine site; these read GE and SLH. C345 (S-methylcysteine intermediate) is an active-site residue.

Belongs to the radical SAM superfamily. RlmN family. Requires [4Fe-4S] cluster as cofactor.

It localises to the cytoplasm. The enzyme catalyses adenosine(2503) in 23S rRNA + 2 reduced [2Fe-2S]-[ferredoxin] + 2 S-adenosyl-L-methionine = 2-methyladenosine(2503) in 23S rRNA + 5'-deoxyadenosine + L-methionine + 2 oxidized [2Fe-2S]-[ferredoxin] + S-adenosyl-L-homocysteine. It catalyses the reaction adenosine(37) in tRNA + 2 reduced [2Fe-2S]-[ferredoxin] + 2 S-adenosyl-L-methionine = 2-methyladenosine(37) in tRNA + 5'-deoxyadenosine + L-methionine + 2 oxidized [2Fe-2S]-[ferredoxin] + S-adenosyl-L-homocysteine. In terms of biological role, specifically methylates position 2 of adenine 2503 in 23S rRNA and position 2 of adenine 37 in tRNAs. m2A2503 modification seems to play a crucial role in the proofreading step occurring at the peptidyl transferase center and thus would serve to optimize ribosomal fidelity. The polypeptide is Dual-specificity RNA methyltransferase RlmN (Pseudomonas putida (strain W619)).